The primary structure comprises 159 residues: Small ribosomal subunit protein uS4 (159 aa).

The 53-residue stretch at 106–158 (RRLQTIVYRMGLAKSIYHARQLIVHGHIAIEGRRVTSPGFLVPRELEDKITLV) folds into the S4 RNA-binding domain.

It belongs to the universal ribosomal protein uS4 family. Part of the 30S ribosomal subunit. Contacts protein S5. The interaction surface between S4 and S5 is involved in control of translational fidelity.

Functionally, one of the primary rRNA binding proteins, it binds directly to 16S rRNA where it nucleates assembly of the body of the 30S subunit. Its function is as follows. With S5 and S12 plays an important role in translational accuracy. The protein is Small ribosomal subunit protein uS4 of Pyrobaculum arsenaticum (strain DSM 13514 / JCM 11321 / PZ6).